We begin with the raw amino-acid sequence, 464 residues long: Cell division protein FtsA (464 aa).

The segment at 392-464 (EVIESDKDSE…FKKLMKSLFE (73 aa)) is disordered. Over residues 416–455 (KKENDEVAPEAPREESYEDRENHLEDEQQTEGKAKEESKF) the composition is skewed to basic and acidic residues.

Belongs to the FtsA/MreB family. Self-interacts. Interacts with FtsZ.

It localises to the cell membrane. In terms of biological role, cell division protein that is involved in the assembly of the Z ring. May serve as a membrane anchor for the Z ring. The protein is Cell division protein FtsA of Staphylococcus epidermidis (strain ATCC 35984 / DSM 28319 / BCRC 17069 / CCUG 31568 / BM 3577 / RP62A).